The primary structure comprises 136 residues: UPF0213 protein AHA_3736 (136 aa).

The region spanning 17–92 (SHWFIYMVRT…KQQSKAFKEQ (76 aa)) is the GIY-YIG domain. Residues 114–136 (QKRPRYAAAKEGSDNRECQRQVD) form a disordered region. Over residues 124–136 (EGSDNRECQRQVD) the composition is skewed to basic and acidic residues.

It belongs to the UPF0213 family.

The sequence is that of UPF0213 protein AHA_3736 from Aeromonas hydrophila subsp. hydrophila (strain ATCC 7966 / DSM 30187 / BCRC 13018 / CCUG 14551 / JCM 1027 / KCTC 2358 / NCIMB 9240 / NCTC 8049).